A 374-amino-acid polypeptide reads, in one-letter code: Beta-1,3-N-acetylglucosaminyltransferase lunatic fringe (374 aa).

Over 1–8 (MLKTYRGK) the chain is Cytoplasmic. A helical; Signal-anchor for type II membrane protein membrane pass occupies residues 9–29 (VVVSLAGATVTCLGFLLFLSQ). The Lumenal portion of the chain corresponds to 30 to 374 (HQRIQADGMQ…TPWCPPQVAY (345 aa)). Residue Asn-40 is glycosylated (N-linked (GlcNAc...) asparagine). The interval 80 to 100 (RSRREADKPSEAPGAATDAPP) is disordered. Arg-123 serves as a coordination point for substrate. An N-linked (GlcNAc...) asparagine glycan is attached at Asn-162. Disulfide bonds link Cys-163/Cys-174 and Cys-192/Cys-255. Position 196 (Asp-196) interacts with substrate. A Mn(2+)-binding site is contributed by Asp-197. Asp-285 is an active-site residue. His-309 is a binding site for Mn(2+). A disulfide bridge connects residues Cys-359 and Cys-368.

It belongs to the glycosyltransferase 31 family. The cofactor is Mn(2+). Co(2+) is required as a cofactor. Post-translationally, a soluble form may be derived from the membrane form by proteolytic processing. In the embryo, expressed along the A-P axis of the neural tube, within the lateral plate mesoderm, in the presomitic mesoderm and the somites, in specific rhombomeres of the hindbrain (even-numbered rhombomeres) and in the otic vesicles.

The protein localises to the golgi apparatus membrane. It catalyses the reaction 3-O-(alpha-L-fucosyl)-L-threonyl-[EGF-like domain protein] + UDP-N-acetyl-alpha-D-glucosamine = 3-O-(N-acetyl-beta-D-glucosaminyl-(1-&gt;3)-alpha-L-fucosyl)-L-threonyl-[EGF-like domain protein] + UDP + H(+). The enzyme catalyses 3-O-(alpha-L-fucosyl)-L-seryl-[EGF-like domain protein] + UDP-N-acetyl-alpha-D-glucosamine = 3-O-(N-acetyl-beta-D-glucosaminyl-(1-&gt;3)-alpha-L-fucosyl)-L-seryl-[EGF-like domain protein] + UDP + H(+). Glycosyltransferase that initiates the elongation of O-linked fucose residues attached to EGF-like repeats in the extracellular domain of Notch molecules. Involved in the correct formation of boundaries in the somites and hindbrain. Required for Delta-Notch-mediated induction of hypochord cells at the lateral borders of the midline precursor domain. The sequence is that of Beta-1,3-N-acetylglucosaminyltransferase lunatic fringe (lfng) from Danio rerio (Zebrafish).